We begin with the raw amino-acid sequence, 232 residues long: Cilia- and flagella-associated protein 95 (232 aa).

Over 1-96 (MDSSDSSCQE…PVWISETREK (96 aa)) the chain is Extracellular. Asn-75 is a glycosylation site (N-linked (GlcNAc...) asparagine). Residues 97–115 (MAQVCLNTKLAKIKSKALL) traverse the membrane as a helical segment. Residues 116–232 (NEETMNSGII…TGGPIAPFLK (117 aa)) lie on the Cytoplasmic side of the membrane. The mn stretch occupies residues 153 to 163 (LTTYAEEYAPP).

In terms of assembly, microtubule inner protein component of sperm flagellar doublet microtubules. Interacts with MYH9. Interacts with MYH10. As to expression, expressed in trachea multiciliated cells.

It localises to the cytoplasm. The protein resides in the cytoskeleton. Its subcellular location is the cilium axoneme. It is found in the flagellum axoneme. The protein localises to the cell membrane. In terms of biological role, microtubule inner protein (MIP) part of the dynein-decorated doublet microtubules (DMTs) in cilia axoneme, which is required for motile cilia beating. The protein is Cilia- and flagella-associated protein 95 of Bos taurus (Bovine).